We begin with the raw amino-acid sequence, 370 residues long: Actin-related protein 2/3 complex subunit 1A (370 aa).

WD repeat units lie at residues 6 to 45 (FLLEPITCHAWNRDRTQIALSPNNHEVHIYKKNGSQWTKA), 50 to 89 (EHNGHITGIDWAPKSDRIVTCGADRNAYVWSQKDGIWKPT), 140 to 179 (PIRSTVLSLDWHPNNVLLAAGSCDFKCRVFSAYIKEVDEK), 202 to 241 (GTGGWVHGVSFSASGSRLAWVSHDSTVSVADASKSVQVST), 244 to 284 (TEFL…TFVS), and 322 to 365 (LHQN…SSIQ).

It belongs to the WD repeat ARPC1 family. Probable component of the Arp2/3 complex in which it may replace ARPC1B.

The protein resides in the cytoplasm. The protein localises to the cytoskeleton. Its subcellular location is the nucleus. In terms of biological role, probably functions as a component of the Arp2/3 complex which is involved in regulation of actin polymerization and together with an activating nucleation-promoting factor (NPF) mediates the formation of branched actin networks. In addition to its role in the cytoplasmic cytoskeleton, the Arp2/3 complex also promotes actin polymerization in the nucleus, thereby regulating gene transcription and repair of damaged DNA. This Rattus norvegicus (Rat) protein is Actin-related protein 2/3 complex subunit 1A (Arpc1a).